An 853-amino-acid polypeptide reads, in one-letter code: E3 ubiquitin-protein ligase ZNRF3 (853 aa).

The N-terminal stretch at 1–28 (MKEPRIRGGLPLVWLWVLLAVAPGESLA) is a signal peptide. Residues 29 to 192 (KETAFVEVVL…PRQPTEYFDM (164 aa)) lie on the Extracellular side of the membrane. Residues 193–213 (GIFLAFFVVVSLVCLILLIKI) form a helical membrane-spanning segment. Residues 214 to 853 (KLKQRRSQNS…GQDCHPTDRD (640 aa)) lie on the Cytoplasmic side of the membrane. The RING-type; atypical zinc-finger motif lies at 266–307 (CAICLEKYIDGEELRVIPCTHRFHKRCVDPWLLQNHTCPHCR). Disordered stretches follow at residues 583 to 629 (SRSP…RLSS), 650 to 673 (SSGT…RGPE), 685 to 713 (GDPS…GGLY), and 834 to 853 (TGKE…TDRD). Positions 589–607 (TGGGDAPGCGGEGGTGSGR) are enriched in gly residues. Positions 615-629 (HQTFPNSPSRDRLSS) are enriched in polar residues.

It belongs to the ZNRF3 family.

Its subcellular location is the cell membrane. The enzyme catalyses S-ubiquitinyl-[E2 ubiquitin-conjugating enzyme]-L-cysteine + [acceptor protein]-L-lysine = [E2 ubiquitin-conjugating enzyme]-L-cysteine + N(6)-ubiquitinyl-[acceptor protein]-L-lysine.. Its pathway is protein modification; protein ubiquitination. E3 ubiquitin-protein ligase that acts as a negative regulator of the Wnt signaling pathway by mediating the ubiquitination and subsequent degradation of Wnt receptor complex components. Along with RSPO2 and RNF43, constitutes a master switch that governs limb specification. The chain is E3 ubiquitin-protein ligase ZNRF3 (znrf3) from Xenopus tropicalis (Western clawed frog).